Consider the following 31-residue polypeptide: Cytochrome b6-f complex subunit 6 (31 aa).

Residues 4–24 form a helical membrane-spanning segment; that stretch reads ITSYFGFLLAALTITSALLIG.

This sequence belongs to the PetL family. As to quaternary structure, the 4 large subunits of the cytochrome b6-f complex are cytochrome b6, subunit IV (17 kDa polypeptide, PetD), cytochrome f and the Rieske protein, while the 4 small subunits are PetG, PetL, PetM and PetN. The complex functions as a dimer.

Its subcellular location is the plastid. It is found in the chloroplast thylakoid membrane. Functionally, component of the cytochrome b6-f complex, which mediates electron transfer between photosystem II (PSII) and photosystem I (PSI), cyclic electron flow around PSI, and state transitions. PetL is important for photoautotrophic growth as well as for electron transfer efficiency and stability of the cytochrome b6-f complex. The sequence is that of Cytochrome b6-f complex subunit 6 from Piper cenocladum (Ant piper).